A 224-amino-acid polypeptide reads, in one-letter code: Urease accessory protein UreF (224 aa).

The protein belongs to the UreF family. As to quaternary structure, ureD, UreF and UreG form a complex that acts as a GTP-hydrolysis-dependent molecular chaperone, activating the urease apoprotein by helping to assemble the nickel containing metallocenter of UreC. The UreE protein probably delivers the nickel.

The protein resides in the cytoplasm. Functionally, required for maturation of urease via the functional incorporation of the urease nickel metallocenter. This chain is Urease accessory protein UreF, found in Methylorubrum populi (strain ATCC BAA-705 / NCIMB 13946 / BJ001) (Methylobacterium populi).